Consider the following 103-residue polypeptide: Putative ribosomal RNA-processing protein 7 homolog B (103 aa).

The span at 1-19 (MEAYDQKIAEEEAKAKEEE) shows a compositional bias: basic and acidic residues. A disordered region spans residues 1-25 (MEAYDQKIAEEEAKAKEEEGVPDEE). Residues 71 to 100 (ESKMEHLAQLRKKFEEDKQRIELLRAQRKF) are a coiled coil.

This sequence belongs to the RRP7 family.

The sequence is that of Putative ribosomal RNA-processing protein 7 homolog B from Homo sapiens (Human).